The sequence spans 329 residues: Flotillin-like protein FloA (329 aa).

Helical transmembrane passes span 4 to 24 (FIPF…ILSF) and 27 to 47 (VGLW…TLVG).

The protein belongs to the flotillin-like FloA family. Homooligomerizes.

It is found in the cell membrane. Its subcellular location is the membrane raft. Its function is as follows. Found in functional membrane microdomains (FMM) that may be equivalent to eukaryotic membrane rafts. FMMs are highly dynamic and increase in number as cells age. Flotillins are thought to be important factors in membrane fluidity. The protein is Flotillin-like protein FloA of Alkaliphilus metalliredigens (strain QYMF).